Consider the following 153-residue polypeptide: Small ribosomal subunit protein uS7c (153 aa).

This sequence belongs to the universal ribosomal protein uS7 family. As to quaternary structure, part of the 30S ribosomal subunit.

It localises to the plastid. Functionally, one of the primary rRNA binding proteins, it binds directly to 16S rRNA where it nucleates assembly of the head domain of the 30S subunit. The chain is Small ribosomal subunit protein uS7c (rps7) from Helicosporidium sp. subsp. Simulium jonesii (Green alga).